Reading from the N-terminus, the 319-residue chain is Cobalamin biosynthesis protein CbiB (319 aa).

5 helical membrane-spanning segments follow: residues 52–74 (IGGG…GVLA), 79–101 (IHPW…GRSL), 155–177 (GIIA…YKAV), 207–229 (YLPA…LSGW), and 296–318 (LMWV…LSGV).

This sequence belongs to the CobD/CbiB family.

It is found in the cell membrane. It participates in cofactor biosynthesis; adenosylcobalamin biosynthesis; adenosylcobalamin from cob(II)yrinate a,c-diamide: step 4/7. In terms of biological role, converts cobyric acid to cobinamide by the addition of aminopropanol on the F carboxylic group. However, the true cosubstrate could be (R)-1-amino-2-propanol O-2-phosphate, leading to cobinamide phosphate. This Salmonella typhi protein is Cobalamin biosynthesis protein CbiB.